We begin with the raw amino-acid sequence, 527 residues long: Probable protein kinase UbiB (527 aa).

The region spanning 118-501 (DFERVPVASA…QKRTNRLLQG (384 aa)) is the Protein kinase domain. Residues 124-132 (VASASIAQV) and lysine 150 contribute to the ATP site. Aspartate 285 functions as the Proton acceptor in the catalytic mechanism. The helical transmembrane segment at 502-522 (LLMFGVAVGVGAVLARAWLAI) threads the bilayer.

The protein belongs to the ABC1 family. UbiB subfamily.

It is found in the cell inner membrane. It functions in the pathway cofactor biosynthesis; ubiquinone biosynthesis [regulation]. In terms of biological role, is probably a protein kinase regulator of UbiI activity which is involved in aerobic coenzyme Q (ubiquinone) biosynthesis. The chain is Probable protein kinase UbiB from Paraburkholderia phymatum (strain DSM 17167 / CIP 108236 / LMG 21445 / STM815) (Burkholderia phymatum).